Reading from the N-terminus, the 236-residue chain is Purine nucleoside phosphorylase DeoD-type (236 aa).

An a purine D-ribonucleoside-binding site is contributed by H5. Residues G21, R25, R44, and 88-91 (RIGS) each bind phosphate. Residues 180 to 182 (EME) and 204 to 205 (SD) each bind a purine D-ribonucleoside. D205 functions as the Proton donor in the catalytic mechanism.

The protein belongs to the PNP/UDP phosphorylase family. As to quaternary structure, homohexamer; trimer of homodimers.

It carries out the reaction a purine D-ribonucleoside + phosphate = a purine nucleobase + alpha-D-ribose 1-phosphate. The enzyme catalyses a purine 2'-deoxy-D-ribonucleoside + phosphate = a purine nucleobase + 2-deoxy-alpha-D-ribose 1-phosphate. Catalyzes the reversible phosphorolytic breakdown of the N-glycosidic bond in the beta-(deoxy)ribonucleoside molecules, with the formation of the corresponding free purine bases and pentose-1-phosphate. In Chromobacterium violaceum (strain ATCC 12472 / DSM 30191 / JCM 1249 / CCUG 213 / NBRC 12614 / NCIMB 9131 / NCTC 9757 / MK), this protein is Purine nucleoside phosphorylase DeoD-type.